We begin with the raw amino-acid sequence, 727 residues long: Pollen-specific leucine-rich repeat extensin-like protein 3 (727 aa).

Positions 1–22 are cleaved as a signal peptide; the sequence is MPHIYKQPLGIFQGFVPTLTDA. The stretch at 19–43 is one LRR 1 repeat; that stretch reads LTDAEVSFIAQRQLLTLPENGELPD. Asn80 is a glycosylation site (N-linked (GlcNAc...) asparagine). LRR repeat units follow at residues 107–131, 132–154, 156–179, 180–202, 203–226, 228–249, 250–273, 275–296, and 297–321; these read VAVV…LGLM, TDVA…SFEK, SLMH…VLSW, PAVK…ELFK, KDLD…LGES, ASVV…IGNM, KNLN…IGKL, NVNV…SFVG, and LTSM…ICKL. N-linked (GlcNAc...) asparagine glycosylation occurs at Asn326. The disordered stretch occupies residues 381–727; that stretch reads SKDKCAGGSS…SPPPPMFQGY (347 aa). Pro residues-rich tracts occupy residues 397–419, 446–457, 466–479, 492–677, and 718–727; these read SPSP…PQPN, SPPPASSPPTSP, VHKP…PQPN, SPPP…PKMS, and SPPPPMFQGY. Residues 432-727 form a contains the Ser-Pro(4) repeats region; sequence SPPPPQQPHH…SPPPPMFQGY (296 aa).

Post-translationally, hydroxylated on proline residues in the S-P-P-P-P repeat. O-glycosylated on hydroxyprolines. In terms of tissue distribution, expressed in flowers, stamen, pollen, and pollinated carpels.

It is found in the secreted. The protein localises to the cell wall. In terms of biological role, modulates cell morphogenesis by regulating cell wall formation and assembly, and/or growth polarization. The sequence is that of Pollen-specific leucine-rich repeat extensin-like protein 3 (PEX3) from Arabidopsis thaliana (Mouse-ear cress).